The sequence spans 289 residues: Right origin-binding protein (289 aa).

In terms of domain architecture, HTH araC/xylS-type spans 8 to 106; that stretch reads RDLLIWLEGH…AQTPALYRRS (99 aa). DNA-binding regions (H-T-H motif) lie at residues 25 to 46 and 73 to 96; these read DNVAAKAGYSKWHLQRMFKDVT and ILDIALQYRFDSQQTFTRAFKKQF.

Transcriptional regulator. Binds to the right arm of the replication origin oriC of the chromosome. Rob binding may influence the formation of the nucleoprotein structure, required for oriC function in the initiation of replication. This is Right origin-binding protein (rob) from Escherichia coli O157:H7.